A 532-amino-acid polypeptide reads, in one-letter code: Egg peptide speract receptor (532 aa).

The first 30 residues, 1–30 (MGLPMMLQQYCWAACLVICIAISSVDDVGA), serve as a signal peptide directing secretion. Topologically, residues 31-491 (EQNYGREAVE…VVCEGSTAPP (461 aa)) are extracellular. SRCR domains lie at 43–144 (IRLI…VECL), 153–257 (LRMI…VVCK), 264–366 (IRLM…VVCA), and 382–485 (VRIV…VVCE). Disulfide bonds link cysteine 68–cysteine 133, cysteine 81–cysteine 143, cysteine 112–cysteine 122, cysteine 178–cysteine 244, cysteine 191–cysteine 256, cysteine 223–cysteine 233, cysteine 289–cysteine 355, cysteine 302–cysteine 365, cysteine 335–cysteine 345, cysteine 406–cysteine 475, cysteine 419–cysteine 484, and cysteine 454–cysteine 465. N-linked (GlcNAc...) asparagine glycans are attached at residues asparagine 78 and asparagine 115. A glycan (N-linked (GlcNAc...) asparagine) is linked at asparagine 459. Residues 492 to 520 (SGMSIAVIGGAAGGGVAGLAVAAFAFYYI) traverse the membrane as a helical segment. Residues 521-532 (KFVKPAGGGGQA) are Cytoplasmic-facing.

The protein resides in the membrane. Its function is as follows. Receptor for the egg peptide speract. The protein is Egg peptide speract receptor of Strongylocentrotus purpuratus (Purple sea urchin).